The primary structure comprises 293 residues: Transcription initiation factor IIB (293 aa).

Residues 10–41 form a TFIIB-type zinc finger; it reads NKVCCYAHPESPLIEDYRAGDMICSECGLVVG. Residues C14, H17, C33, and C36 each coordinate Zn(2+). Tandem repeats lie at residues 101-177 and 195-271.

It belongs to the TFIIB family. In terms of assembly, associates with TFIID-IIA (DA complex) to form TFIID-IIA-IIB (DAB-complex) which is then recognized by polymerase II.

The protein localises to the nucleus. Its function is as follows. General factor that plays a major role in the activation of eukaryotic genes transcribed by RNA polymerase II. This chain is Transcription initiation factor IIB (TfIIB), found in Drosophila virilis (Fruit fly).